The chain runs to 234 residues: Orotidine 5'-phosphate decarboxylase (234 aa).

Substrate-binding positions include Asp-10, Lys-32, 59–68 (DLKLHDIPTT), Thr-122, Arg-184, Gln-193, Gly-213, and Arg-214. Lys-61 (proton donor) is an active-site residue.

This sequence belongs to the OMP decarboxylase family. Type 1 subfamily. In terms of assembly, homodimer.

The catalysed reaction is orotidine 5'-phosphate + H(+) = UMP + CO2. Its pathway is pyrimidine metabolism; UMP biosynthesis via de novo pathway; UMP from orotate: step 2/2. In terms of biological role, catalyzes the decarboxylation of orotidine 5'-monophosphate (OMP) to uridine 5'-monophosphate (UMP). In Bacillus pumilus (strain SAFR-032), this protein is Orotidine 5'-phosphate decarboxylase.